The sequence spans 648 residues: Biosynthetic arginine decarboxylase (648 aa).

K109 carries the N6-(pyridoxal phosphate)lysine modification. Residue 291-301 (IDVGGGLGIDF) coordinates substrate.

The protein belongs to the Orn/Lys/Arg decarboxylase class-II family. SpeA subfamily. The cofactor is Mg(2+). It depends on pyridoxal 5'-phosphate as a cofactor.

It catalyses the reaction L-arginine + H(+) = agmatine + CO2. It functions in the pathway amine and polyamine biosynthesis; agmatine biosynthesis; agmatine from L-arginine: step 1/1. Catalyzes the biosynthesis of agmatine from arginine. The protein is Biosynthetic arginine decarboxylase of Prochlorococcus marinus (strain MIT 9515).